The following is a 48-amino-acid chain: Disintegrin accutin (48 aa).

The residue at position 1 (Gln1) is a Pyrrolidone carboxylic acid. The region spanning 1–48 (QGAQCTAGPCCWPCKFLKEGTICRRARGDDLDDYCNGISADCPRNPYY) is the Disintegrin domain. 3 cysteine pairs are disulfide-bonded: Cys5-Cys11, Cys10-Cys35, and Cys23-Cys42. Positions 27–29 (RGD) match the Cell attachment site motif.

This sequence belongs to the venom metalloproteinase (M12B) family. P-II subfamily. P-IIa sub-subfamily. Monomer (disintegrin). Expressed by the venom gland.

Its subcellular location is the secreted. Its function is as follows. Inhibit human platelet aggregation induced by ADP, collagen, thrombin or the thromboxane analog U46619 in platelet suspension with IC(50) values of 66-267 nM. Acts by inhibiting fibrinogen interaction with platelet receptors GPIIb/GPIIIa (ITGA2B/ITGB3). It also inhibits angiogenesis in vivo and in vitro by blocking integrin alpha-V/beta-3 (ITGAV/ITGB3) of endothelial cells and by inducing apoptosis. The chain is Disintegrin accutin from Deinagkistrodon acutus (Hundred-pace snake).